We begin with the raw amino-acid sequence, 346 residues long: fMet-Leu-Phe receptor (346 aa).

Asn1 and Asn7 each carry an N-linked (GlcNAc...) asparagine glycan. At 1–24 the chain is on the extracellular side; the sequence is NSSLPTNISGGTPAVSAGYLFLDI. A helical membrane pass occupies residues 25-47; sequence VTYLVFAVTFVLGVLGNGLVIWV. The Cytoplasmic portion of the chain corresponds to 48 to 58; the sequence is AGFRMTHTVTT. The helical transmembrane segment at 59–80 threads the bilayer; it reads ISYLNLAVADFCFTSTLPFFMV. The Extracellular segment spans residues 81–97; it reads KKAMGGHWPFGWFLCKF. Residues Cys95 and Cys173 are joined by a disulfide bond. The helical transmembrane segment at 98–118 threads the bilayer; it reads IFTIVDINLFGSVFLIALIAL. The Cytoplasmic portion of the chain corresponds to 119-137; it reads DRCVCVLHPVWTQNHRTVS. Residues 138-159 traverse the membrane as a helical segment; it reads LAKKVIIGPWVMALLLTLPVII. The Extracellular segment spans residues 160 to 202; that stretch reads RVTTVPGKMGTVACTFNFSPWTNDPKERIKVAVAMLTVRGIIR. Residues 203–223 form a helical membrane-spanning segment; sequence FIIGFSAPMSIVAVSYGLIAT. Topologically, residues 224 to 239 are cytoplasmic; it reads KIDKQGLIKSSRTLRV. A helical transmembrane segment spans residues 240-263; sequence LSFVAAAFFLSWSPYQVVALIATV. Residues 264 to 282 are Extracellular-facing; the sequence is RIRELLQGMYKEIGIAVDV. A helical transmembrane segment spans residues 283–302; sequence TSALAFFNSCLNPMLYVFMG. Residues 303–346 are Cytoplasmic-facing; that stretch reads QDFRERLIHALPASLERALTEDSTQTSDTATNSTLPSAEVALQA. The disordered stretch occupies residues 322-346; sequence TEDSTQTSDTATNSTLPSAEVALQA. Residues 323–338 show a composition bias toward polar residues; that stretch reads EDSTQTSDTATNSTLP.

This sequence belongs to the G-protein coupled receptor 1 family. In terms of processing, phosphorylated; which is necessary for desensitization.

The protein localises to the cell membrane. Functionally, high affinity receptor for N-formyl-methionyl peptides (fMLP), which are powerful neutrophil chemotactic factors. Binding of fMLP to the receptor stimulates intracellular calcium mobilization and superoxide anion release. This response is mediated via a G-protein that activates a phosphatidylinositol-calcium second messenger system. Receptor for TAFA4, mediates its effects on chemoattracting macrophages, promoting phagocytosis and increasing ROS release. Receptor for cathepsin CTSG, leading to increased phagocyte chemotaxis. This Gorilla gorilla gorilla (Western lowland gorilla) protein is fMet-Leu-Phe receptor (FPR1).